The sequence spans 195 residues: ATP-dependent Clp protease proteolytic subunit (195 aa).

The Nucleophile role is filled by Ser99. Residue His124 is part of the active site.

The protein belongs to the peptidase S14 family. As to quaternary structure, fourteen ClpP subunits assemble into 2 heptameric rings which stack back to back to give a disk-like structure with a central cavity, resembling the structure of eukaryotic proteasomes.

The protein resides in the cytoplasm. It catalyses the reaction Hydrolysis of proteins to small peptides in the presence of ATP and magnesium. alpha-casein is the usual test substrate. In the absence of ATP, only oligopeptides shorter than five residues are hydrolyzed (such as succinyl-Leu-Tyr-|-NHMec, and Leu-Tyr-Leu-|-Tyr-Trp, in which cleavage of the -Tyr-|-Leu- and -Tyr-|-Trp bonds also occurs).. In terms of biological role, cleaves peptides in various proteins in a process that requires ATP hydrolysis. Has a chymotrypsin-like activity. Plays a major role in the degradation of misfolded proteins. The protein is ATP-dependent Clp protease proteolytic subunit of Carboxydothermus hydrogenoformans (strain ATCC BAA-161 / DSM 6008 / Z-2901).